A 214-amino-acid polypeptide reads, in one-letter code: Outer-membrane lipoprotein LolB (214 aa).

Residues 1–25 (MNNLKRFTESIFSCIALSTLLFLGG) form the signal peptide. Cys-26 carries the N-palmitoyl cysteine lipid modification. A lipid anchor (S-diacylglycerol cysteine) is attached at Cys-26.

This sequence belongs to the LolB family. In terms of assembly, monomer.

It is found in the cell outer membrane. Plays a critical role in the incorporation of lipoproteins in the outer membrane after they are released by the LolA protein. This Shewanella putrefaciens (strain CN-32 / ATCC BAA-453) protein is Outer-membrane lipoprotein LolB.